A 549-amino-acid chain; its full sequence is MLRISRDTKIVARVTHVTKSRTYATSTAPKLVVGLEIHTQLLTKRKLFSSTTVPSLSTTPNTKVSYFDAALPGTQPRLNPQALLLALKAAIALRCDVKELTAFDRKHYFYPDQPAGYQITQHRKPLAINGKLKLNWWDLYSQNEWPALLAKEANTDSADTRDLASRSIDVPILQIQLEQDTGKSTYHGSETLVDLNRTNMPLIEIVTAPVIHTASHAAAFVKKLQTLLKRIGVSTGEFESGAMRVDVNVSIGEDGERCEIKNLPNTSSIEAAIEAEYNRQVELVGKGGTVEKSTMGFDGKKTFILRSKENAVDYRYMPDPELPLIRLSKGTLLKVRDSLPELPDKVFSRLTDDPYYVTTKDALTLIHVAGLSDYYFEVFERVSEETEDAKALKQPVNWVVNELLGRVRKADEARAAESAESGEPDLGAHDYNSIYPPAKLAELILAVHNHQLTLPSARLLFQHFLANPEDLKNMTIEQAITEFELGESGDVVDACRQVINEHESVVKSVKDGSKPGSIKFLIGMVMKATQGRINPAVIERQLKTEMRHM.

The transit peptide at 1–23 (MLRISRDTKIVARVTHVTKSRTY) directs the protein to the mitochondrion.

The protein belongs to the GatB/GatE family. GatB subfamily. As to quaternary structure, subunit of the heterotrimeric GatFAB amidotransferase (AdT) complex, composed of A, B and F subunits.

It localises to the mitochondrion. The catalysed reaction is L-glutamyl-tRNA(Gln) + L-glutamine + ATP + H2O = L-glutaminyl-tRNA(Gln) + L-glutamate + ADP + phosphate + H(+). In terms of biological role, allows the formation of correctly charged Gln-tRNA(Gln) through the transamidation of misacylated Glu-tRNA(Gln) in the mitochondria. The reaction takes place in the presence of glutamine and ATP through an activated gamma-phospho-Glu-tRNA(Gln). In Yarrowia lipolytica (strain CLIB 122 / E 150) (Yeast), this protein is Glutamyl-tRNA(Gln) amidotransferase subunit B, mitochondrial.